A 585-amino-acid chain; its full sequence is Amyloid protein-binding protein 2 (585 aa).

TPR repeat units follow at residues 50–83, 120–153, 206–239, 288–321, 333–367, 429–462, 471–505, and 514–547; these read QGRL…HHCF, IQVG…CTLH, AALY…ITAG, SDTL…RQSV, HEDL…ITHI, AKHY…KEQL, ALSV…GKKL, and EYDY…NRLR.

In terms of assembly, component of a CRL2 E3 ubiquitin-protein ligase complex, also named ECS (Elongin BC-CUL2/5-SOCS-box protein) complex, composed of CUL2, Elongin BC (ELOB and ELOC), RBX1 and substrate-specific adapter APPBP2. Interacts with APP; APP interaction inhibits the E3 ubiquitin-protein ligase activity of the CRL2(APPBP2) complex. Post-translationally, rapidly degraded by the proteasome upon overexpression of a C-terminal fragment of APP.

Its subcellular location is the nucleus. It is found in the cytoplasm. The protein resides in the cytoskeleton. It localises to the membrane. It participates in protein modification; protein ubiquitination. E3 ubiquitin-protein ligase activity of the CRL2(APPBP2) complex is inhibited by APP. Substrate-recognition component of a Cul2-RING (CRL2) E3 ubiquitin-protein ligase complex of the DesCEND (destruction via C-end degrons) pathway, which recognizes a C-degron located at the extreme C terminus of target proteins, leading to their ubiquitination and degradation. The C-degron recognized by the DesCEND pathway is usually a motif of less than ten residues and can be present in full-length proteins, truncated proteins or proteolytically cleaved forms. The CRL2(APPBP2) complex specifically recognizes proteins with a -Arg-Xaa-Xaa-Gly degron at the C-terminus, leading to their ubiquitination and degradation. The CRL2(APPBP2) complex mediates ubiquitination and degradation of truncated SELENOV selenoproteins produced by failed UGA/Sec decoding, which end with a -Arg-Xaa-Xaa-Gly degron. May play a role in intracellular protein transport: may be involved in the translocation of APP along microtubules toward the cell surface. The chain is Amyloid protein-binding protein 2 from Mus musculus (Mouse).